The chain runs to 101 residues: Glutaredoxin-1 (101 aa).

The region spanning 5–101 is the Glutaredoxin domain; the sequence is KDRVEKLIQT…GSLSKMIAAL (97 aa). Cysteines 25 and 28 form a disulfide.

Belongs to the glutaredoxin family.

The protein localises to the cytoplasm. The protein resides in the cytosol. Functionally, multifunctional enzyme with glutathione-dependent oxidoreductase, glutathione peroxidase and glutathione S-transferase (GST) activity. The disulfide bond functions as an electron carrier in the glutathione-dependent synthesis of deoxyribonucleotides by the enzyme ribonucleotide reductase. In addition, it is also involved in reducing cytosolic protein- and non-protein-disulfides in a coupled system with glutathione reductase. May play a role in protection against oxidative stress caused by superoxide in vivo by regulating the redox state of the protein sulfhydryl groups. In Rhizophagus irregularis (strain DAOM 181602 / DAOM 197198 / MUCL 43194) (Arbuscular mycorrhizal fungus), this protein is Glutaredoxin-1.